Consider the following 171-residue polypeptide: Small ribosomal subunit protein bS16 (171 aa).

Positions 114–171 are disordered; that stretch reads EGGPTTEAAKPKKKAATSGAKKAAKAAEPEAAASEAAEPEAAAAPAEGGEQAESSAES. Over residues 142–171 the composition is skewed to low complexity; the sequence is PEAAASEAAEPEAAAAPAEGGEQAESSAES.

It belongs to the bacterial ribosomal protein bS16 family.

In Mycolicibacterium paratuberculosis (strain ATCC BAA-968 / K-10) (Mycobacterium paratuberculosis), this protein is Small ribosomal subunit protein bS16.